Here is a 394-residue protein sequence, read N- to C-terminus: MTPAADPGQGILSRMTETTIGIGGAAESTDMVLNIGPQHPSTHGVLRLRIVLDGERVQHAEPVIGYMHRGAEKLFEARDYRQIIMLANRHDWLSAFSNELGVVMAVERMLGMEVPERAVWTRTLLAELNRVLNHLMFLGSYPLELGGITPVFHAFREREELQAVMEEVSGGRMHYMFNRVGGLKEDVPAGWAGRVRDAVASVRSRMDVYENLVLGNEIFRGRTRDVGVLSAAAVHAYGVSGPIARASGVDFDLRRDEPYLAYGELRDTLKVVTRTEGDCLARFECLLEQTLNSLDLADACLDRMAHLAPGPINQRLPKVLKAPEGHTYAWTENPLGVNGYYLVSKGEKTPYRLKLRSASFNNIQALTELLPGTLVADMVAILGSLFFVVGDIDK.

It belongs to the complex I 49 kDa subunit family. As to quaternary structure, NDH-1 is composed of 14 different subunits. Subunits NuoB, C, D, E, F, and G constitute the peripheral sector of the complex.

It is found in the cell membrane. It carries out the reaction a quinone + NADH + 5 H(+)(in) = a quinol + NAD(+) + 4 H(+)(out). In terms of biological role, NDH-1 shuttles electrons from NADH, via FMN and iron-sulfur (Fe-S) centers, to quinones in the respiratory chain. The immediate electron acceptor for the enzyme in this species is believed to be a menaquinone. Couples the redox reaction to proton translocation (for every two electrons transferred, four hydrogen ions are translocated across the cytoplasmic membrane), and thus conserves the redox energy in a proton gradient. The sequence is that of NADH-quinone oxidoreductase subunit D 2 from Streptomyces griseus subsp. griseus (strain JCM 4626 / CBS 651.72 / NBRC 13350 / KCC S-0626 / ISP 5235).